We begin with the raw amino-acid sequence, 428 residues long: 3-phosphoshikimate 1-carboxyvinyltransferase (428 aa).

Positions 22, 23, and 27 each coordinate 3-phosphoshikimate. Residue Lys-22 participates in phosphoenolpyruvate binding. Positions 96 and 124 each coordinate phosphoenolpyruvate. 7 residues coordinate 3-phosphoshikimate: Ser-169, Ser-170, Gln-171, Ser-197, Asp-313, Asn-336, and Lys-340. Gln-171 lines the phosphoenolpyruvate pocket. The active-site Proton acceptor is the Asp-313. 3 residues coordinate phosphoenolpyruvate: Arg-344, Arg-386, and Lys-411.

This sequence belongs to the EPSP synthase family. As to quaternary structure, monomer.

Its subcellular location is the cytoplasm. The catalysed reaction is 3-phosphoshikimate + phosphoenolpyruvate = 5-O-(1-carboxyvinyl)-3-phosphoshikimate + phosphate. Its pathway is metabolic intermediate biosynthesis; chorismate biosynthesis; chorismate from D-erythrose 4-phosphate and phosphoenolpyruvate: step 6/7. Its function is as follows. Catalyzes the transfer of the enolpyruvyl moiety of phosphoenolpyruvate (PEP) to the 5-hydroxyl of shikimate-3-phosphate (S3P) to produce enolpyruvyl shikimate-3-phosphate and inorganic phosphate. The protein is 3-phosphoshikimate 1-carboxyvinyltransferase of Xenorhabdus nematophila (strain ATCC 19061 / DSM 3370 / CCUG 14189 / LMG 1036 / NCIMB 9965 / AN6).